The chain runs to 360 residues: 3-dehydroquinate synthase (360 aa).

Residues D72 to K77, G106 to D110, T130 to T131, K143, K152, and T170 to T173 contribute to the NAD(+) site. Residues E185, H248, and H265 each coordinate Zn(2+).

It belongs to the sugar phosphate cyclases superfamily. Dehydroquinate synthase family. It depends on Co(2+) as a cofactor. Zn(2+) is required as a cofactor. The cofactor is NAD(+).

Its subcellular location is the cytoplasm. It carries out the reaction 7-phospho-2-dehydro-3-deoxy-D-arabino-heptonate = 3-dehydroquinate + phosphate. The protein operates within metabolic intermediate biosynthesis; chorismate biosynthesis; chorismate from D-erythrose 4-phosphate and phosphoenolpyruvate: step 2/7. Its function is as follows. Catalyzes the conversion of 3-deoxy-D-arabino-heptulosonate 7-phosphate (DAHP) to dehydroquinate (DHQ). The polypeptide is 3-dehydroquinate synthase (Geobacter metallireducens (strain ATCC 53774 / DSM 7210 / GS-15)).